We begin with the raw amino-acid sequence, 259 residues long: tRNA pseudouridine synthase A (259 aa).

Aspartate 51 acts as the Nucleophile in catalysis. Tyrosine 109 contributes to the substrate binding site.

This sequence belongs to the tRNA pseudouridine synthase TruA family. Homodimer.

The enzyme catalyses uridine(38/39/40) in tRNA = pseudouridine(38/39/40) in tRNA. Functionally, formation of pseudouridine at positions 38, 39 and 40 in the anticodon stem and loop of transfer RNAs. This chain is tRNA pseudouridine synthase A, found in Nitrosococcus oceani (strain ATCC 19707 / BCRC 17464 / JCM 30415 / NCIMB 11848 / C-107).